A 232-amino-acid chain; its full sequence is Sugar fermentation stimulation protein homolog (232 aa).

It belongs to the SfsA family.

This chain is Sugar fermentation stimulation protein homolog, found in Moorella thermoacetica (strain ATCC 39073 / JCM 9320).